The following is a 227-amino-acid chain: Extracellular small neutral protease (227 aa).

The first 29 residues, 1–29, serve as a signal peptide directing secretion; it reads MRITLPLLSTAVGLGLTAAVLGTGPAATA. Residues 30 to 42 constitute a propeptide that is removed on maturation; it reads AAPQEPVRAAQLG. Ca(2+)-binding residues include Asp-156 and Thr-158. Zn(2+) is bound at residue His-163. Glu-164 is an active-site residue. Positions 167 and 173 each coordinate Zn(2+). Residues Cys-179 and Cys-192 are joined by a disulfide bond.

Belongs to the peptidase M7 family. Ca(2+) is required as a cofactor. The cofactor is Zn(2+). Post-translationally, the N-terminus is blocked.

The protein resides in the secreted. It catalyses the reaction Hydrolyzes proteins with a preference for Tyr or Phe in the P1' position. Has no action on amino-acid p-nitroanilides.. The chain is Extracellular small neutral protease (snpA) from Streptomyces lividans.